A 151-amino-acid polypeptide reads, in one-letter code: Ubiquitin-conjugating enzyme E2 N (151 aa).

The region spanning 3-149 is the UBC core domain; the sequence is SLPRRIIKET…AREWTQKYAV (147 aa). Cys-87 functions as the Glycyl thioester intermediate in the catalytic mechanism.

This sequence belongs to the ubiquitin-conjugating enzyme family.

The enzyme catalyses S-ubiquitinyl-[E1 ubiquitin-activating enzyme]-L-cysteine + [E2 ubiquitin-conjugating enzyme]-L-cysteine = [E1 ubiquitin-activating enzyme]-L-cysteine + S-ubiquitinyl-[E2 ubiquitin-conjugating enzyme]-L-cysteine.. It participates in protein modification; protein ubiquitination. Functionally, catalyzes the covalent attachment of ubiquitin to other proteins. The sequence is that of Ubiquitin-conjugating enzyme E2 N (ben) from Drosophila melanogaster (Fruit fly).